A 192-amino-acid chain; its full sequence is Phosphoheptose isomerase (192 aa).

Residues 37 to 192 form the SIS domain; the sequence is LADSFKAGGK…IQLIEKEMVK (156 aa). 52–54 is a substrate binding site; that stretch reads NGG. Residues H61 and E65 each coordinate Zn(2+). Substrate contacts are provided by residues E65, 93-94, 119-121, S124, and Q172; these read ND and STS. Zn(2+)-binding residues include Q172 and H180.

The protein belongs to the SIS family. GmhA subfamily. Homotetramer. It depends on Zn(2+) as a cofactor.

It is found in the cytoplasm. The enzyme catalyses 2 D-sedoheptulose 7-phosphate = D-glycero-alpha-D-manno-heptose 7-phosphate + D-glycero-beta-D-manno-heptose 7-phosphate. Its pathway is carbohydrate biosynthesis; D-glycero-D-manno-heptose 7-phosphate biosynthesis; D-glycero-alpha-D-manno-heptose 7-phosphate and D-glycero-beta-D-manno-heptose 7-phosphate from sedoheptulose 7-phosphate: step 1/1. Its function is as follows. Catalyzes the isomerization of sedoheptulose 7-phosphate in D-glycero-D-manno-heptose 7-phosphate. The polypeptide is Phosphoheptose isomerase (Shigella dysenteriae serotype 1 (strain Sd197)).